The chain runs to 1166 residues: Serine/threonine-protein kinase BRI1-like 1 (1166 aa).

A signal peptide spans 1-21 (MKQRWLLVLILCFFTTSLVMG). Topologically, residues 22–776 (IHGKHLINDD…IHAKKQTVAT (755 aa)) are extracellular. The N-linked (GlcNAc...) asparagine glycan is linked to asparagine 33. The Cys pair 1 motif lies at 66–73 (CSWRGVSC). LRR repeat units lie at residues 78-99 (RIVG…VNLT), 103-124 (NLQN…SGSD), 126-147 (YLQV…DYVF), 152-173 (NLVS…APSS), 176-197 (SLTT…SFIS), 202-224 (SLKY…SFGI), 227-248 (NLTF…ITLP), 252-274 (FLET…EYWG), 278-300 (NLKQ…LSLL), 303-325 (TLVI…FTAC), 327-349 (WLQN…VVSK), 352-375 (GITY…TNCS), 376-397 (NLRV…GFCS), 403-424 (VLEK…ELGK), 427-449 (SLKT…IWML), 451-473 (NLSD…VCVK), 476-498 (NLET…ISRC), 500-522 (NMIW…IGNL), 524-547 (KLAI…GNCK), and 548-570 (SLIW…LASQ). The N-linked (GlcNAc...) asparagine glycan is linked to asparagine 97. Asparagine 157 carries N-linked (GlcNAc...) asparagine glycosylation. N-linked (GlcNAc...) asparagine glycans are attached at residues asparagine 212, asparagine 227, asparagine 237, and asparagine 257. Asparagine 362 and asparagine 373 each carry an N-linked (GlcNAc...) asparagine glycan. N-linked (GlcNAc...) asparagine glycosylation is found at asparagine 451 and asparagine 461. Asparagine 521, asparagine 532, asparagine 558, and asparagine 638 each carry an N-linked (GlcNAc...) asparagine glycan. LRR repeat units follow at residues 664 to 686 (YLQV…FGGL), 688 to 710 (AIGV…LGSL), and 712 to 734 (FLSD…GQLT). 2 N-linked (GlcNAc...) asparagine glycosylation sites follow: asparagine 722 and asparagine 743. Positions 748 to 755 (CGVPLRPC) match the Cys pair 2 motif. A helical transmembrane segment spans residues 777 to 797 (AVIAGIAFSFMCFVMLVMALY). Topologically, residues 798 to 1166 (RVRKVQKKEQ…LVEESRDKEP (369 aa)) are cytoplasmic. Phosphothreonine is present on residues threonine 848 and threonine 856. Residues 859–1147 (FSAETMVGSG…KADTEEDESL (289 aa)) form the Protein kinase domain. Residues 865–873 (VGSGGFGEV) and lysine 887 each bind ATP. Tyrosine 932 bears the Phosphotyrosine mark. The active-site Proton acceptor is aspartate 987. Residue serine 1022 is modified to Phosphoserine. Tyrosine 1030 is subject to Phosphotyrosine. Threonine 1141 carries the post-translational modification Phosphothreonine. The interval 1142 to 1166 (EEDESLDEFSLKETPLVEESRDKEP) is disordered.

The protein belongs to the protein kinase superfamily. Ser/Thr protein kinase family. In terms of tissue distribution, predominantly expressed in vascular tissues. From 7 day old seedlings, it is expressed in the columella cells of the root tip, in the vascular initials in the meristematic region of the root and in vascular tissues. After germination, it is expressed in the stele cell and in the early differentiation zone of the root, where the expression continues from the root to the hypocotyls and cotyledons following the midvein. In mature plants, it is expressed in the vasculature of the leaf, predominantly in the midvein, and in the vascular bundles of inflorescence stems. Localizes to procambial cells of the vascular bundles located between the differentiating xylem and the phloem.

The protein resides in the cell membrane. It carries out the reaction L-seryl-[protein] + ATP = O-phospho-L-seryl-[protein] + ADP + H(+). The enzyme catalyses L-threonyl-[protein] + ATP = O-phospho-L-threonyl-[protein] + ADP + H(+). In terms of biological role, receptor with a serine/threonine-protein kinase activity. Regulates, in response to brassinosteroid binding, a signaling cascade involved in plant development. Binds brassinolide. May be involved in cell growth and vascular differentiation. The polypeptide is Serine/threonine-protein kinase BRI1-like 1 (BRL1) (Arabidopsis thaliana (Mouse-ear cress)).